Consider the following 95-residue polypeptide: FXYD domain-containing ion transport regulator 6 (95 aa).

A signal peptide spans 1 to 18 (MELVLVFLCSLLAPMVLA). Residues 19–35 (SAAEKEKEMDPFHYDYQ) are Extracellular-facing. A helical membrane pass occupies residues 36-57 (TLRIGGLVFAVVLFSVGILLIL). Residues 58 to 95 (SRRCKCSFNQKPRAPGDEEAQVENLITANATEPQKAEN) lie on the Cytoplasmic side of the membrane. The tract at residues 69–95 (PRAPGDEEAQVENLITANATEPQKAEN) is disordered.

The protein belongs to the FXYD family. Regulatory subunit of the sodium/potassium-transporting ATPase which is composed of a catalytic alpha subunit, a non-catalytic beta subunit and an additional regulatory subunit. The regulatory subunit, a member of the FXYD protein family, modulates the enzymatic activity in a tissue- and isoform-specific way by changing affinities of the Na+/K+-ATPase toward Na(+), K(+) or ATP.

It is found in the cell membrane. In terms of biological role, associates with and regulates the activity of the sodium/potassium-transporting ATPase (NKA) which catalyzes the hydrolysis of ATP coupled with the exchange of Na(+) and K(+) ions across the plasma membrane. Reduces the apparent affinity for intracellular Na(+) with no change in the apparent affinity for extracellular K(+). In addition to modulating NKA kinetics, may also function as a regulator of NKA localization to the plasma membrane. The protein is FXYD domain-containing ion transport regulator 6 of Homo sapiens (Human).